The chain runs to 624 residues: Elongation factor 4 (624 aa).

The 187-residue stretch at 17–203 folds into the tr-type G domain; sequence ALIRNFCIIA…RVVRDVPAPV (187 aa). GTP is bound by residues 29 to 34 and 150 to 153; these read DHGKST and NKID.

This sequence belongs to the TRAFAC class translation factor GTPase superfamily. Classic translation factor GTPase family. LepA subfamily.

Its subcellular location is the cell membrane. It catalyses the reaction GTP + H2O = GDP + phosphate + H(+). In terms of biological role, required for accurate and efficient protein synthesis under certain stress conditions. May act as a fidelity factor of the translation reaction, by catalyzing a one-codon backward translocation of tRNAs on improperly translocated ribosomes. Back-translocation proceeds from a post-translocation (POST) complex to a pre-translocation (PRE) complex, thus giving elongation factor G a second chance to translocate the tRNAs correctly. Binds to ribosomes in a GTP-dependent manner. The polypeptide is Elongation factor 4 (Streptomyces griseus subsp. griseus (strain JCM 4626 / CBS 651.72 / NBRC 13350 / KCC S-0626 / ISP 5235)).